The primary structure comprises 106 residues: UPF0145 protein Cthe_0398 (106 aa).

The protein belongs to the UPF0145 family.

This chain is UPF0145 protein Cthe_0398, found in Acetivibrio thermocellus (strain ATCC 27405 / DSM 1237 / JCM 9322 / NBRC 103400 / NCIMB 10682 / NRRL B-4536 / VPI 7372) (Clostridium thermocellum).